Consider the following 229-residue polypeptide: Ribosome maturation factor RimM (229 aa).

The region spanning 148 to 229 (ADEFYWVDLI…RVVVDWEADY (82 aa)) is the PRC barrel domain.

It belongs to the RimM family. Binds ribosomal protein uS19.

It is found in the cytoplasm. An accessory protein needed during the final step in the assembly of 30S ribosomal subunit, possibly for assembly of the head region. Essential for efficient processing of 16S rRNA. May be needed both before and after RbfA during the maturation of 16S rRNA. It has affinity for free ribosomal 30S subunits but not for 70S ribosomes. The sequence is that of Ribosome maturation factor RimM from Burkholderia pseudomallei (strain 1710b).